The chain runs to 135 residues: Lymphocyte antigen 6 complex locus protein G6d (135 aa).

Residues 1–19 (MNSQLVGILLSALLGVALG) form the signal peptide. One can recognise a UPAR/Ly6 domain in the interval 22–121 (TRCYDCGGGP…ASSVTPLCIL (100 aa)). Disulfide bonds link Cys24-Cys48, Cys27-Cys35, Cys42-Cys76, Cys82-Cys101, and Cys102-Cys107. O-linked (GalNAc...) threonine glycosylation occurs at Thr68. Asn108 is lipidated: GPI-anchor amidated asparagine. A propeptide spans 109-135 (SAVASSVTPLCILAAAVTTLAWLLPGL) (removed in mature form).

As to quaternary structure, homodimer. O-glycosylated. Expressed in embryonic tissue and adult lung, kidney, brain, liver and spleen.

The protein resides in the cell membrane. It localises to the cell projection. The protein localises to the filopodium. In Mus musculus (Mouse), this protein is Lymphocyte antigen 6 complex locus protein G6d (Ly6g6d).